Here is a 341-residue protein sequence, read N- to C-terminus: Mediator of RNA polymerase II transcription subunit 18 (341 aa).

A disordered region spans residues 139–216; the sequence is KVMDKEKVQS…KEHSEGNASQ (78 aa). Positions 163-211 are enriched in basic and acidic residues; it reads EDKKENIKKEESGEEVKGSGEEVKGSGEEVKGSGEEAKKSGEEAKEHSE.

Belongs to the Mediator complex subunit 18 family. As to quaternary structure, component of the Mediator complex.

The protein resides in the nucleus. In terms of biological role, component of the Mediator complex, a coactivator involved in the regulated transcription of nearly all RNA polymerase II-dependent genes. Mediator functions as a bridge to convey information from gene-specific regulatory proteins to the basal RNA polymerase II transcription machinery. Mediator is recruited to promoters by direct interactions with regulatory proteins and serves as a scaffold for the assembly of a functional preinitiation complex with RNA polymerase II and the general transcription factors. This is Mediator of RNA polymerase II transcription subunit 18 (SRB5) from Debaryomyces hansenii (strain ATCC 36239 / CBS 767 / BCRC 21394 / JCM 1990 / NBRC 0083 / IGC 2968) (Yeast).